Consider the following 109-residue polypeptide: uncharacterized protein (109 aa).

Helical transmembrane passes span 24 to 44 (SLGI…SAFV) and 68 to 88 (VIVL…SIFI).

The protein resides in the membrane. This is an uncharacterized protein from Saccharomyces cerevisiae (strain ATCC 204508 / S288c) (Baker's yeast).